Consider the following 391-residue polypeptide: Acetate kinase (391 aa).

Asparagine 7 lines the Mg(2+) pocket. Position 14 (lysine 14) interacts with ATP. Substrate is bound at residue arginine 88. Aspartate 145 functions as the Proton donor/acceptor in the catalytic mechanism. ATP contacts are provided by residues 203–207 (HAGNG), 278–280 (DAR), and 326–330 (GMGEN). Residue glutamate 378 coordinates Mg(2+).

It belongs to the acetokinase family. As to quaternary structure, homodimer. It depends on Mg(2+) as a cofactor. The cofactor is Mn(2+).

The protein localises to the cytoplasm. It carries out the reaction acetate + ATP = acetyl phosphate + ADP. Its pathway is metabolic intermediate biosynthesis; acetyl-CoA biosynthesis; acetyl-CoA from acetate: step 1/2. Catalyzes the formation of acetyl phosphate from acetate and ATP. Can also catalyze the reverse reaction. The sequence is that of Acetate kinase from Phytoplasma mali (strain AT).